Here is a 748-residue protein sequence, read N- to C-terminus: Polyribonucleotide nucleotidyltransferase (748 aa).

Mg(2+) contacts are provided by D522 and D528. A KH domain is found at 588-647; sequence PRVTTIRVPVDKIGEVIGPKGKIINAITEETGAQISIEDDGTVFVGATDGPSAQAAIDRI. The S1 motif domain maps to 659–728; the sequence is GERFLGTVVK…KRGKISLVLV (70 aa).

The protein belongs to the polyribonucleotide nucleotidyltransferase family. Mg(2+) is required as a cofactor.

Its subcellular location is the cytoplasm. It catalyses the reaction RNA(n+1) + phosphate = RNA(n) + a ribonucleoside 5'-diphosphate. Its function is as follows. Involved in mRNA degradation. Catalyzes the phosphorolysis of single-stranded polyribonucleotides processively in the 3'- to 5'-direction. This is Polyribonucleotide nucleotidyltransferase from Mycobacterium avium (strain 104).